Consider the following 1666-residue polypeptide: Complement C3 (1666 aa).

A signal peptide spans 1-22 (MGPAAGPSLLLLLLASVSLALG). Residues S70, S296, and S302 each carry the phosphoserine modification. Intrachain disulfides connect C557-C821, C630-C666, C698-C725, C699-C732, C712-C733, C878-C1517, C1106-C1163, C1363-C1493, C1394-C1462, C1510-C1515, C1522-C1593, C1540-C1664, and C1640-C1649. S676 bears the Phosphoserine mark. The Anaphylatoxin-like domain occupies 698 to 733 (CCEDGMRENPMQFSCQRRARYVSLGEACVKAFLDCC). N944 carries N-linked (GlcNAc...) asparagine glycosylation. Position 973 is a phosphoserine (S973). A cross-link (isoglutamyl cysteine thioester (Cys-Gln)) is located at residues 1015-1018 (CGEQ). Position 1326 is a phosphoserine (S1326). The NTR domain occupies 1522 to 1664 (CFIQLPEKIT…FTENMVVFGC (143 aa)). Position 1576 is a phosphoserine (S1576). The N-linked (GlcNAc...) asparagine glycan is linked to N1620. The interaction with CFP/properdin stretch occupies residues 1637–1662 (AEECQDEENQQQCQDLGTFTENMVVF).

In absence of complement activation, the C3 precursor is first processed by the removal of 4 Arg residues, forming two chains, beta and alpha, linked by a disulfide bond. In terms of assembly, complement C3b is composed of complement C3b and complement C3 beta chains that are associated via disulfide bonds. Non-enzymatic component of the C5 convertase, also named C4bC2bC3b, composed of the serine protease complement C2b (C2), complement C3b, as well as complement C4b (C4). Non-enzymatic component of the C5 convertase of the alternative complement pathways composed of the serine protease complement CFB and complement C3b. Interacts with CFP; interaction takes place together with CFB in the alternative complement system and allows the complex to become active. Interacts with CR1 (via Sushi 8 and Sushi 9 domains). Interacts with CFH. As to quaternary structure, interacts with CFH. Interacts with CR2. During pregnancy, C3dg exists as a complex (probably a 2:2:2 heterohexamer) with AGT and the proform of PRG2. Interacts with CR2 (via the N-terminal Sushi domains 1 and 2). C3 precursor is first processed by the removal of 4 Arg residues, forming two chains, beta and alpha, linked by a disulfide bond. During activation of the complement systems, the alpha chain is cleaved into C3a and C3b by the C3 convertase: C3b stays linked to the beta chain, while C3a is released in the plasma. The alpha chain is cleaved by the serine protease complement C2b component of the C3 convertase to generate C3a and C3b following activation by the classical, lectin and GZMK complement systems. The alpha chain is cleaved by CFB component of the C3 convertase to generate C3a and C3b following activation by the alternative complement system. In terms of processing, C3a is further processed by carboxypeptidases to release the C-terminal arginine residue generating the acylation stimulating protein (ASP). Levels of ASP are increased in adipocytes in the postprandial period and by insulin and dietary chylomicrons. Post-translationally, complement C3b is rapidly split in two positions by factor I (CFI) and a cofactor (CFH) to form iC3b (inactivated C3b) and C3f which is released. CFI and CFH catalyze proteolytic degradation of already-deposited complement C3b. Then iC3b is slowly cleaved (possibly by CFI) to form C3c (beta chain + alpha' chain fragment 1 + alpha' chain fragment 2), C3dg and C3f. Other proteases produce other fragments such as C3d or C3g. Upon activation, the internal thioester bond reacts with carbohydrate antigens on the target surface to form amide or ester bonds, leading to covalent association with the surface of pathogens. In terms of processing, complement C3b interacts with complement C4b via a thioester linkage. Post-translationally, phosphorylated by FAM20C in the extracellular medium.

It localises to the secreted. The protein resides in the cell surface. Its activity is regulated as follows. Complement activation is inhibited by VSIG4. Functionally, precursor of non-enzymatic components of the classical, alternative, lectin and GZMK complement pathways, which consist in a cascade of proteins that leads to phagocytosis and breakdown of pathogens and signaling that strengthens the adaptive immune system. Its function is as follows. Non-enzymatic component of C5 convertase. Generated following cleavage by C3 convertase, it covalently attaches to the surface of pathogens, where it acts as an opsonin that marks the surface of antigens for removal. Complement C3b binds covalently via its reactive thioester, to cell surface carbohydrates or immune aggregates. Together with complement C4b, it then recruits the serine protease complement C2b to form the C5 convertase, which cleaves and activate C5, the next component of the complement pathways. In the alternative complement pathway, recruits the serine protease CFB to form the C5 convertase that cleaves and activates C5. In terms of biological role, mediator of local inflammatory process released following cleavage by C3 convertase. Acts by binding to its receptor, C3AR1, activating G protein-coupled receptor signaling, promoting the phosphorylation, ARRB2-mediated internalization and endocytosis of C3AR1. C3a anaphylatoxin stimulates the activation of immune cells such as mast cells and basophilic leukocytes to release inflammation agents, such as cytokines, chemokines and histamine, which promote inflammation development. Also acts as potent chemoattractant for the migration of macrophages and neutrophils to the inflamed tissues, resulting in neutralization of the inflammatory triggers by multiple ways, such as phagocytosis and generation of reactive oxidants. Adipogenic hormone that stimulates triglyceride synthesis and glucose transport in adipocytes, regulating fat storage and playing a role in postprandial triglyceride clearance. Appears to stimulate triglyceride synthesis via activation of the PLC, MAPK and AKT signaling pathways. Acts by binding to its receptor, C5AR2, activating G protein-coupled receptor signaling, promoting the phosphorylation, ARRB2-mediated internalization and endocytosis of C5AR2. Functionally, acts as a chemoattractant for neutrophils in chronic inflammation. This chain is Complement C3, found in Cavia porcellus (Guinea pig).